A 91-amino-acid chain; its full sequence is Gem-associated protein 7 homolog (91 aa).

The Sm domain maps to L18–Q86.

The protein belongs to the gemin-7 family. As to quaternary structure, part of the core SMN complex at least composed of smn1, yip11/gem2, gem6, gem7 and gem8. Interacts with gem6; the interaction is direct. Interacts with gem8; the interaction is direct.

The sequence is that of Gem-associated protein 7 homolog from Schizosaccharomyces pombe (strain 972 / ATCC 24843) (Fission yeast).